A 194-amino-acid chain; its full sequence is Endoribonuclease YbeY (194 aa).

Residues His-127, His-131, and Asp-137 each coordinate Zn(2+). Residues 162 to 194 (PLSNDEDSAPEQDDSFDDDASDSSGGIMSGGVS) are disordered. Residues 165–182 (NDEDSAPEQDDSFDDDAS) are compositionally biased toward acidic residues.

Belongs to the endoribonuclease YbeY family. Zn(2+) is required as a cofactor.

The protein resides in the cytoplasm. Functionally, single strand-specific metallo-endoribonuclease involved in late-stage 70S ribosome quality control and in maturation of the 3' terminus of the 16S rRNA. The sequence is that of Endoribonuclease YbeY from Rhodopirellula baltica (strain DSM 10527 / NCIMB 13988 / SH1).